A 186-amino-acid chain; its full sequence is MSKKFGAMILCSAAAVAAAFFAQQKGLPTQQQNQVSPKAVSMIVNLEGCVRNPYKCPADVWTNGVGNTHNVDKTKILTIDEVATDLRRNIKEAENCINTYFNGEKMNQGQYDAMVSLAFNVGCGNIKTYYSKTQGKRVATTIYRAAQAENWILMCNRIEDFNKSGGRVLKGLQNRRAKEKALCLGE.

The helical; Signal-anchor for type II membrane protein transmembrane segment at 1–18 (MSKKFGAMILCSAAAVAA) threads the bilayer. 2 disulfides stabilise this stretch: Cys11-Cys49 and Cys49-Cys56. Active-site proton donor/acceptor residues include Glu47 and Cys56.

This sequence belongs to the glycosyl hydrolase 24 family. All the periplasmic cyteines of the inactive, membrane-associated endolysin are involved in disulfide bond. In the active soluble form, disulfide bonds are isomerized and only the catalytic cysteine remains free.

It localises to the host cell inner membrane. The enzyme catalyses Hydrolysis of (1-&gt;4)-beta-linkages between N-acetylmuramic acid and N-acetyl-D-glucosamine residues in a peptidoglycan and between N-acetyl-D-glucosamine residues in chitodextrins.. Signal-arrest-release (SAR) endolysin with lysozyme activity that degrades host peptidoglycans and participates with the pinholin and spanin proteins in the sequential events which lead to programmed host cell lysis releasing the mature viral particles. Once the pinholin has permeabilized the host cell membrane, the SAR-endolysin is released into the periplasm where it breaks down the peptidoglycan layer. The sequence is that of SAR-endolysin (lys) from Haemophilus phage HP1 (strain HP1c1) (Bacteriophage HP1).